The following is a 207-amino-acid chain: MRLRPLGIEGVWEITPEQRADPRGVFLDWYHVDRFAEAIGRPLRLAQANLSVSVRGVVRGIHFVDVPPGQAKYVTCVRGAVFDVVVDLRVGSPTYGCWEGTRLDDVSRRAVYLSEGIGHGFCAISDEATLCYLSSGTYDPATEHGVHPLDPELAIDWPTGTPLLSPRDQDALLLAEARDAGLLPTYATCQAVTVPSPAPGSVGDPGP.

Substrate is bound by residues Arg23, Asp28, 47–49 (QAN), and Arg59. The active-site Proton acceptor is the His62. The substrate site is built by Lys72 and His119. Tyr132 serves as the catalytic Proton donor. Residues Glu143 and Arg167 each coordinate substrate.

It belongs to the dTDP-4-dehydrorhamnose 3,5-epimerase family.

It participates in antibiotic biosynthesis; novobiocin biosynthesis. In terms of biological role, dTDP-6-deoxy-D-xylo-4-hexulose 3-epimerase that acts together with NovU to catalyze the formation of dTDP-4-keto-6-deoxy-5-C-methyl-L-lyxo-hexose from dTDP-4-keto-6-deoxy-D-glucose in the novobiocin biosynthesis pathway, an aminocoumarin family antibiotic that targets bacterial DNA gyrases. This Streptomyces niveus (Streptomyces spheroides) protein is dTDP-4-dehydrorhamnose 3-epimerase.